The following is a 424-amino-acid chain: Histidinol dehydrogenase homolog (424 aa).

Zn(2+) contacts are provided by glutamine 250 and histidine 253. Residues glutamate 318 and histidine 319 each act as proton acceptor in the active site. Zn(2+)-binding residues include aspartate 352 and histidine 411.

The protein belongs to the histidinol dehydrogenase family. Requires Zn(2+) as cofactor.

The chain is Histidinol dehydrogenase homolog from Shouchella clausii (strain KSM-K16) (Alkalihalobacillus clausii).